Here is a 366-residue protein sequence, read N- to C-terminus: Histone-lysine N-methyltransferase SETD7 (366 aa).

MORN repeat units follow at residues 36–58, 59–81, and 106–128; these read FEGN…DGST, LEGY…DGGV, and FKGQ…DGGS. The SET domain maps to 214–336; sequence ERVYVADSLI…AEEELTVAYG (123 aa). Residues 226-228, Asn296, His297, and Glu356 contribute to the S-adenosyl-L-methionine site; that span reads AGE.

It belongs to the class V-like SAM-binding methyltransferase superfamily. Histone-lysine methyltransferase family. SET7 subfamily. As to quaternary structure, interacts with IPF1/PDX-1.

It is found in the nucleus. Its subcellular location is the chromosome. The catalysed reaction is L-lysyl(4)-[histone H3] + S-adenosyl-L-methionine = N(6)-methyl-L-lysyl(4)-[histone H3] + S-adenosyl-L-homocysteine + H(+). The enzyme catalyses L-lysyl-[protein] + S-adenosyl-L-methionine = N(6)-methyl-L-lysyl-[protein] + S-adenosyl-L-homocysteine + H(+). Functionally, histone methyltransferase that specifically monomethylates 'Lys-4' of histone H3. H3 'Lys-4' methylation represents a specific tag for epigenetic transcriptional activation. Plays a central role in the transcriptional activation of genes such as collagenase or insulin. Recruited by IPF1/PDX-1 to the insulin promoter, leading to activate transcription. Also has methyltransferase activity toward non-histone proteins such as CGAS, p53/TP53, TAF10, and possibly TAF7 by recognizing and binding the [KR]-[STA]-K in substrate proteins. Monomethylates 'Lys-189' of TAF10, leading to increase the affinity of TAF10 for RNA polymerase II. Monomethylates 'Lys-372' of p53/TP53, stabilizing p53/TP53 and increasing p53/TP53-mediated transcriptional activation. Monomethylates 'Lys-491' of CGAS, promoting interaction between SGF29 and CGAS. In Mus musculus (Mouse), this protein is Histone-lysine N-methyltransferase SETD7 (Setd7).